The sequence spans 265 residues: Cyclin-B2-5 (265 aa).

It belongs to the cyclin family. Cyclin AB subfamily.

In Arabidopsis thaliana (Mouse-ear cress), this protein is Cyclin-B2-5 (CYCB2-5).